We begin with the raw amino-acid sequence, 238 residues long: Isoprene-epoxide--glutathione S-transferase (238 aa).

The 76-residue stretch at 7–82 (YVPAWGIPDI…YLKNKFGDKL (76 aa)) folds into the GST N-terminal domain. One can recognise a GST C-terminal domain in the interval 118–238 (DAGWETYIPF…LERIRKQYDI (121 aa)).

This sequence belongs to the GST superfamily. As to quaternary structure, homodimer.

The enzyme catalyses 2-glutathionyl-2-methylbut-3-en-1-ol = (3R)-3,4-epoxy-3-methylbut-1-ene + glutathione. With respect to regulation, activity is inhibited by 1,2-epoxyhexane. In terms of biological role, involved in isoprene degradation. Catalyzes the glutathione-dependent ring opening of various epoxides. The highest conversion rate is observed with the physiological substrate, 3,4-epoxy-3-methyl-1-butene, which is the primary oxidation product of isoprene. It can also use other epoxides, including epoxyethane, epoxypropane, epithiopropane, epichlorohydrin, epifluorohydrin, epibromohydrin, 1,2-epoxybutane, 1,2-epoxyhexane, cis-2,3-epoxybutane, cis-1,2-dichloroepoxyethane and trans-1,2-dichloroepoxyethane. This Rhodococcus sp. (strain AD45) protein is Isoprene-epoxide--glutathione S-transferase.